We begin with the raw amino-acid sequence, 178 residues long: Glucagon-2 (178 aa).

Positions 1–21 (MFGIHSLAGVLLLVIVQSQLA) are cleaved as a signal peptide. Propeptides lie at residues 83–87 (SGAPS), 123–134 (ESAEESMNGPMS), and 171–178 (SNKRQEDH).

Belongs to the glucagon family.

The protein resides in the secreted. In terms of biological role, promotes hydrolysis of glycogen and lipids, and raises the blood sugar level. This is Glucagon-2 (gcg2) from Oncorhynchus mykiss (Rainbow trout).